The sequence spans 179 residues: ATP synthase subunit b (179 aa).

A helical transmembrane segment spans residues 27 to 47 (TAITFLVMLVVLGKFAWGPIV).

The protein belongs to the ATPase B chain family. In terms of assembly, F-type ATPases have 2 components, F(1) - the catalytic core - and F(0) - the membrane proton channel. F(1) has five subunits: alpha(3), beta(3), gamma(1), delta(1), epsilon(1). F(0) has three main subunits: a(1), b(2) and c(10-14). The alpha and beta chains form an alternating ring which encloses part of the gamma chain. F(1) is attached to F(0) by a central stalk formed by the gamma and epsilon chains, while a peripheral stalk is formed by the delta and b chains.

The protein resides in the cell inner membrane. Functionally, f(1)F(0) ATP synthase produces ATP from ADP in the presence of a proton or sodium gradient. F-type ATPases consist of two structural domains, F(1) containing the extramembraneous catalytic core and F(0) containing the membrane proton channel, linked together by a central stalk and a peripheral stalk. During catalysis, ATP synthesis in the catalytic domain of F(1) is coupled via a rotary mechanism of the central stalk subunits to proton translocation. Its function is as follows. Component of the F(0) channel, it forms part of the peripheral stalk, linking F(1) to F(0). In Anaeromyxobacter sp. (strain K), this protein is ATP synthase subunit b.